Here is a 304-residue protein sequence, read N- to C-terminus: Polyisoprenyl-teichoic acid--peptidoglycan teichoic acid transferase TagU (304 aa).

The Cytoplasmic portion of the chain corresponds to 1 to 4 (MKKK). Residues 5–25 (ILFWILGIIGIMIIGGGVYAY) form a helical; Signal-anchor for type II membrane protein membrane-spanning segment. Topologically, residues 26-304 (NVYSSVSKTL…KLRAHLELTK (279 aa)) are extracellular.

It belongs to the LytR/CpsA/Psr (LCP) family.

The protein localises to the cell membrane. It participates in cell wall biogenesis. Its function is as follows. May catalyze the final step in cell wall teichoic acid biosynthesis, the transfer of the anionic cell wall polymers (APs) from their lipid-linked precursor to the cell wall peptidoglycan (PG). The sequence is that of Polyisoprenyl-teichoic acid--peptidoglycan teichoic acid transferase TagU from Bacillus mycoides (strain KBAB4) (Bacillus weihenstephanensis).